The sequence spans 186 residues: Probable GTP-binding protein EngB (186 aa).

The EngB-type G domain occupies 18–186 (DKKEICFIGR…LKKLIGSVIL (169 aa)). Residues 26–33 (GRSNVGKS), 52–56 (GRTQL), 69–72 (DLPG), 135–138 (NKAD), and 166–168 (VSA) contribute to the GTP site. The Mg(2+) site is built by Ser-33 and Thr-54.

This sequence belongs to the TRAFAC class TrmE-Era-EngA-EngB-Septin-like GTPase superfamily. EngB GTPase family. Mg(2+) is required as a cofactor.

Necessary for normal cell division and for the maintenance of normal septation. The protein is Probable GTP-binding protein EngB of Malacoplasma penetrans (strain HF-2) (Mycoplasma penetrans).